Here is a 180-residue protein sequence, read N- to C-terminus: Large ribosomal subunit protein uL5 (180 aa).

It belongs to the universal ribosomal protein uL5 family. As to quaternary structure, part of the 50S ribosomal subunit; part of the 5S rRNA/L5/L18/L25 subcomplex. Contacts the 5S rRNA and the P site tRNA. Forms a bridge to the 30S subunit in the 70S ribosome.

Functionally, this is one of the proteins that bind and probably mediate the attachment of the 5S RNA into the large ribosomal subunit, where it forms part of the central protuberance. In the 70S ribosome it contacts protein S13 of the 30S subunit (bridge B1b), connecting the 2 subunits; this bridge is implicated in subunit movement. Contacts the P site tRNA; the 5S rRNA and some of its associated proteins might help stabilize positioning of ribosome-bound tRNAs. The sequence is that of Large ribosomal subunit protein uL5 from Pediococcus pentosaceus (strain ATCC 25745 / CCUG 21536 / LMG 10740 / 183-1w).